Here is a 252-residue protein sequence, read N- to C-terminus: 2-succinyl-6-hydroxy-2,4-cyclohexadiene-1-carboxylate synthase (252 aa).

It belongs to the AB hydrolase superfamily. MenH family. Monomer.

The catalysed reaction is 5-enolpyruvoyl-6-hydroxy-2-succinyl-cyclohex-3-ene-1-carboxylate = (1R,6R)-6-hydroxy-2-succinyl-cyclohexa-2,4-diene-1-carboxylate + pyruvate. It functions in the pathway quinol/quinone metabolism; 1,4-dihydroxy-2-naphthoate biosynthesis; 1,4-dihydroxy-2-naphthoate from chorismate: step 3/7. Its pathway is quinol/quinone metabolism; menaquinone biosynthesis. Its function is as follows. Catalyzes a proton abstraction reaction that results in 2,5-elimination of pyruvate from 2-succinyl-5-enolpyruvyl-6-hydroxy-3-cyclohexene-1-carboxylate (SEPHCHC) and the formation of 2-succinyl-6-hydroxy-2,4-cyclohexadiene-1-carboxylate (SHCHC). The polypeptide is 2-succinyl-6-hydroxy-2,4-cyclohexadiene-1-carboxylate synthase (Salmonella paratyphi B (strain ATCC BAA-1250 / SPB7)).